We begin with the raw amino-acid sequence, 453 residues long: Pup--protein ligase (453 aa).

Glu-9 contributes to the Mg(2+) binding site. Position 53 (Arg-53) interacts with ATP. A Mg(2+)-binding site is contributed by Tyr-55. The Proton acceptor role is filled by Asp-57. Glu-63 is a binding site for Mg(2+). The ATP site is built by Thr-66 and Trp-420.

This sequence belongs to the Pup ligase/Pup deamidase family. Pup-conjugating enzyme subfamily.

The catalysed reaction is ATP + [prokaryotic ubiquitin-like protein]-L-glutamate + [protein]-L-lysine = ADP + phosphate + N(6)-([prokaryotic ubiquitin-like protein]-gamma-L-glutamyl)-[protein]-L-lysine.. Its pathway is protein degradation; proteasomal Pup-dependent pathway. The protein operates within protein modification; protein pupylation. Its function is as follows. Catalyzes the covalent attachment of the prokaryotic ubiquitin-like protein modifier Pup to the proteasomal substrate proteins, thereby targeting them for proteasomal degradation. This tagging system is termed pupylation. The ligation reaction involves the side-chain carboxylate of the C-terminal glutamate of Pup and the side-chain amino group of a substrate lysine. This is Pup--protein ligase from Streptomyces avermitilis (strain ATCC 31267 / DSM 46492 / JCM 5070 / NBRC 14893 / NCIMB 12804 / NRRL 8165 / MA-4680).